Here is a 597-residue protein sequence, read N- to C-terminus: Arginine--tRNA ligase (597 aa).

Residues 125 to 135 (PNTNKPLHLGH) carry the 'HIGH' region motif.

It belongs to the class-I aminoacyl-tRNA synthetase family. Monomer.

It localises to the cytoplasm. It catalyses the reaction tRNA(Arg) + L-arginine + ATP = L-arginyl-tRNA(Arg) + AMP + diphosphate. This Bacteroides thetaiotaomicron (strain ATCC 29148 / DSM 2079 / JCM 5827 / CCUG 10774 / NCTC 10582 / VPI-5482 / E50) protein is Arginine--tRNA ligase.